A 564-amino-acid chain; its full sequence is Pyruvate decarboxylase (564 aa).

Positions 28 and 115 each coordinate pyruvate. Thiamine diphosphate contacts are provided by residues T390 and G413 to I415. Position 444 (D444) interacts with Mg(2+). Residues G445 to S446 and N471 to I476 each bind thiamine diphosphate. N471 and G473 together coordinate Mg(2+). Pyruvate is bound at residue E477.

It belongs to the TPP enzyme family. In terms of assembly, homotetramer. It depends on Mg(2+) as a cofactor. Requires thiamine diphosphate as cofactor.

The enzyme catalyses a 2-oxocarboxylate + H(+) = an aldehyde + CO2. It catalyses the reaction pyruvate + H(+) = acetaldehyde + CO2. The protein is Pyruvate decarboxylase (PDC1) of Candida glabrata (strain ATCC 2001 / BCRC 20586 / JCM 3761 / NBRC 0622 / NRRL Y-65 / CBS 138) (Yeast).